We begin with the raw amino-acid sequence, 435 residues long: E3 ubiquitin-protein ligase itt1 (435 aa).

Residues 16–135 enclose the RWD domain; the sequence is DELIALQSIY…EHVRSIATIA (120 aa). Residues 170–420 form a TRIAD supradomain region; sequence RKFQCNVCFD…DPVSSCYGML (251 aa). Residues Cys-174, Cys-177, Cys-192, His-194, Cys-197, Cys-200, Cys-219, Cys-224, Cys-266, Cys-271, Cys-286, Cys-289, Cys-294, Cys-297, His-302, Cys-308, Cys-368, and Cys-371 each coordinate Zn(2+). The RING-type 1 zinc finger occupies 174-224; sequence CNVCFDEFNGTDCFQLTRCGHVSCQSCLRDYYTMCIQEGMFSQIKCIDLDC. The IBR-type zinc-finger motif lies at 245-308; it reads TNRYKELEEK…ATWHGDLSPC (64 aa). The segment at 368 to 396 adopts an RING-type 2; atypical zinc-finger fold; that stretch reads CPTCDRVVERIDGCCHMNCLCGTHFCFLC. Cys-381 is a catalytic residue. Residues Cys-386, Cys-388, Cys-393, Cys-396, His-408, and Cys-416 each contribute to the Zn(2+) site.

The protein belongs to the RBR family. RNF14 subfamily.

Its subcellular location is the cytoplasm. It localises to the nucleus. The enzyme catalyses [E2 ubiquitin-conjugating enzyme]-S-ubiquitinyl-L-cysteine + [acceptor protein]-L-lysine = [E2 ubiquitin-conjugating enzyme]-L-cysteine + [acceptor protein]-N(6)-ubiquitinyl-L-lysine.. Its pathway is protein modification; protein ubiquitination. E3 ubiquitin-protein ligase involved in the rescue of stalled ribosomes by promoting ubiquitination and degradation of proteins on stalled ribosomes. Specifically required to resolve RNA-protein cross-links caused by reactive aldehydes, which trigger translation stress by stalling ribosomes: acts by catalying 'Lys-6'-linked ubiquitination of RNA-protein cross-links, leading to their degradation. The chain is E3 ubiquitin-protein ligase itt1 (itt1) from Schizosaccharomyces pombe (strain 972 / ATCC 24843) (Fission yeast).